The following is a 590-amino-acid chain: V-type ATP synthase alpha chain (590 aa).

An ATP-binding site is contributed by 231 to 238 (GPFGSGKT).

It belongs to the ATPase alpha/beta chains family.

The enzyme catalyses ATP + H2O + 4 H(+)(in) = ADP + phosphate + 5 H(+)(out). In terms of biological role, produces ATP from ADP in the presence of a proton gradient across the membrane. The V-type alpha chain is a catalytic subunit. The polypeptide is V-type ATP synthase alpha chain (Clostridium botulinum (strain Langeland / NCTC 10281 / Type F)).